The sequence spans 230 residues: Ion-translocating oxidoreductase complex subunit E (230 aa).

Transmembrane regions (helical) follow at residues 18–38 (ALVQLLGLCPLLAVSSTITNA), 39–59 (LGLGIATLLVLVGSNVTVSLI), 69–89 (IPVFVMIIASLVTCVQLLMNA), 93–113 (GLYLSLGIFIPLIVTNCIIIG), 124–144 (VLPAALDGLWMGLGMTSVLVV), and 182–202 (SFLLALLPPGAFIGVGLLIAL).

The protein belongs to the NqrDE/RnfAE family. As to quaternary structure, the complex is composed of six subunits: RnfA, RnfB, RnfC, RnfD, RnfE and RnfG.

It is found in the cell inner membrane. Part of a membrane-bound complex that couples electron transfer with translocation of ions across the membrane. This is Ion-translocating oxidoreductase complex subunit E from Vibrio parahaemolyticus serotype O3:K6 (strain RIMD 2210633).